The primary structure comprises 72 residues: MAKEEAITVDGTVLEPLPNAMFRVELENGHKVLAHISGKMRMHYIRILPGDKVTVELSPYDLSKGRITYRKK.

The S1-like domain maps to 1 to 72; that stretch reads MAKEEAITVD…SKGRITYRKK (72 aa).

This sequence belongs to the IF-1 family. In terms of assembly, component of the 30S ribosomal translation pre-initiation complex which assembles on the 30S ribosome in the order IF-2 and IF-3, IF-1 and N-formylmethionyl-tRNA(fMet); mRNA recruitment can occur at any time during PIC assembly.

It is found in the cytoplasm. One of the essential components for the initiation of protein synthesis. Stabilizes the binding of IF-2 and IF-3 on the 30S subunit to which N-formylmethionyl-tRNA(fMet) subsequently binds. Helps modulate mRNA selection, yielding the 30S pre-initiation complex (PIC). Upon addition of the 50S ribosomal subunit IF-1, IF-2 and IF-3 are released leaving the mature 70S translation initiation complex. This Leptospira borgpetersenii serovar Hardjo-bovis (strain L550) protein is Translation initiation factor IF-1.